The sequence spans 110 residues: Large ribosomal subunit protein uL22 (110 aa).

Belongs to the universal ribosomal protein uL22 family. In terms of assembly, part of the 50S ribosomal subunit.

This protein binds specifically to 23S rRNA; its binding is stimulated by other ribosomal proteins, e.g. L4, L17, and L20. It is important during the early stages of 50S assembly. It makes multiple contacts with different domains of the 23S rRNA in the assembled 50S subunit and ribosome. In terms of biological role, the globular domain of the protein is located near the polypeptide exit tunnel on the outside of the subunit, while an extended beta-hairpin is found that lines the wall of the exit tunnel in the center of the 70S ribosome. The polypeptide is Large ribosomal subunit protein uL22 (Pseudoalteromonas atlantica (strain T6c / ATCC BAA-1087)).